The primary structure comprises 122 residues: NADH-quinone oxidoreductase subunit A (122 aa).

The next 3 helical transmembrane spans lie at 10–30, 66–86, and 91–111; these read MIVL…LTLG, IFAL…PWAV, and LGLF…VGLA.

This sequence belongs to the complex I subunit 3 family. In terms of assembly, NDH-1 is composed of 14 different subunits. Subunits NuoA, H, J, K, L, M, N constitute the membrane sector of the complex.

It localises to the cell membrane. The catalysed reaction is a quinone + NADH + 5 H(+)(in) = a quinol + NAD(+) + 4 H(+)(out). Functionally, NDH-1 shuttles electrons from NADH, via FMN and iron-sulfur (Fe-S) centers, to quinones in the respiratory chain. The immediate electron acceptor for the enzyme in this species is believed to be a menaquinone. Couples the redox reaction to proton translocation (for every two electrons transferred, four hydrogen ions are translocated across the cytoplasmic membrane), and thus conserves the redox energy in a proton gradient. This Bacillus mycoides (strain KBAB4) (Bacillus weihenstephanensis) protein is NADH-quinone oxidoreductase subunit A.